The chain runs to 369 residues: Flagellar P-ring protein (369 aa).

The N-terminal stretch at Met-1–Ala-22 is a signal peptide.

The protein belongs to the FlgI family. The basal body constitutes a major portion of the flagellar organelle and consists of four rings (L,P,S, and M) mounted on a central rod.

It is found in the periplasm. Its subcellular location is the bacterial flagellum basal body. Assembles around the rod to form the L-ring and probably protects the motor/basal body from shearing forces during rotation. This chain is Flagellar P-ring protein, found in Pseudomonas putida (strain ATCC 47054 / DSM 6125 / CFBP 8728 / NCIMB 11950 / KT2440).